We begin with the raw amino-acid sequence, 154 residues long: Small ribosomal subunit protein uS9 (154 aa).

The disordered stretch occupies residues 133–154 (RAKESKKYGLKKARKAPQYSKR). Residues 140–154 (YGLKKARKAPQYSKR) are compositionally biased toward basic residues.

It belongs to the universal ribosomal protein uS9 family.

In Salinispora tropica (strain ATCC BAA-916 / DSM 44818 / JCM 13857 / NBRC 105044 / CNB-440), this protein is Small ribosomal subunit protein uS9.